Reading from the N-terminus, the 415-residue chain is Protein fuzzy homolog (415 aa).

This sequence belongs to the fuzzy family. Component of the CPLANE (ciliogenesis and planar polarity effectors) complex, composed of INTU, FUZ and WDPCP. Interacts with CPLANE1. Interacts with CPLANE2. Expressed in dermal and epidermal cells.

Its subcellular location is the cytoplasm. The protein localises to the cytoskeleton. It is found in the cilium basal body. In terms of biological role, probable planar cell polarity effector involved in cilium biogenesis. May regulate protein and membrane transport to the cilium. Proposed to function as core component of the CPLANE (ciliogenesis and planar polarity effectors) complex involved in the recruitment of peripheral IFT-A proteins to basal bodies. May regulate the morphogenesis of hair follicles which depends on functional primary cilia. Binds phosphatidylinositol 3-phosphate with highest affinity, followed by phosphatidylinositol 4-phosphate and phosphatidylinositol 5-phosphate. The sequence is that of Protein fuzzy homolog (Fuz) from Mus musculus (Mouse).